The chain runs to 265 residues: Homeobox protein CDX-1 (265 aa).

A disordered region spans residues 9-152 (KDSPVYPGPA…GGGGVSGKTR (144 aa)). Positions 30–43 (YGPPAPPPAPPQYP) are enriched in pro residues. A compositionally biased stretch (low complexity) spans 73–92 (AAAYGPGPAAPAASPASLAF). The segment covering 93 to 108 (GPPPDFSPVPAPPGPG) has biased composition (pro residues). Low complexity predominate over residues 110–126 (GLLAQPLGGPGTPSSPG). A DNA-binding region (homeobox) is located at residues 154–213 (KDKYRVVYTDHQRLELEKEFHYSRYITIRRKSELAANLGLTERQVKIWFQNRRAKERKVN). The interaction with DNA stretch occupies residues 157–178 (YRVVYTDHQRLELEKEFHYSRY). An interaction with 5-mCpG DNA region spans residues 196–207 (RQVKIWFQNRRA). Positions 206–217 (RAKERKVNKKKQ) are enriched in basic residues. The interval 206–265 (RAKERKVNKKKQQQQQPPQPPTAHDITATPARPSLGGLCPSNTSLLATSSPMPVKEEFLP) is disordered. Polar residues predominate over residues 245-256 (PSNTSLLATSSP).

This sequence belongs to the Caudal homeobox family.

Its subcellular location is the nucleus. In terms of biological role, plays a role in transcriptional regulation. Involved in activated KRAS-mediated transcriptional activation of PRKD1 in colorectal cancer (CRC) cells. Binds to the PRKD1 promoter in colorectal cancer (CRC) cells. Could play a role in the terminal differentiation of the intestine. Binds preferentially to methylated DNA. This is Homeobox protein CDX-1 (CDX1) from Pongo pygmaeus (Bornean orangutan).